The following is a 777-amino-acid chain: Reticulon-1 (777 aa).

Disordered stretches follow at residues 1–77, 129–182, 198–245, and 293–573; these read MAAP…ETAS, NGHI…ILAD, TRPQ…PVEG, and ATHE…IPGP. A phosphoserine mark is found at serine 13 and serine 68. Over residues 199 to 233 the composition is skewed to basic and acidic residues; sequence RPQEAKGQEEQSPGLEDKDLDFKDKDSEVSTKPEG. Phosphoserine occurs at positions 210, 241, and 325. The span at 326–339 shows a compositional bias: low complexity; sequence PGSVTPPSSGTEPS. Residues serine 348 and serine 350 each carry the phosphoserine modification. Positions 393 to 406 are enriched in polar residues; that stretch reads IPSSLDQEASSAES. Position 485 is a phosphoserine (serine 485). Positions 495-510 are enriched in basic and acidic residues; it reads AIREETSSRATEERAP. Residues 525–534 are compositionally biased toward polar residues; the sequence is TPVTLQSRPE. The 188-residue stretch at 590-777 folds into the Reticulon domain; the sequence is AIDLLYWRDI…KIPGAKRHAE (188 aa). 2 helical membrane-spanning segments follow: residues 604-624 and 706-726; these read IVFG…VVSV and FAVL…LTLL.

As to quaternary structure, interacts with NDRG1. Interacts with BACE1. Interacts with TMEM33. In terms of assembly, interacts with UGCG; regulates the ceramide glucosyltransferase activity of UGCG. As to expression, expressed predominantly in central and peripheral nervous system of newborn and adult rats. Low levels have been also detected in heart, adrenal gland and spleen. Expression of isoform RTN1-B is restricted to particular neuronal types.

It is found in the endoplasmic reticulum membrane. It localises to the golgi apparatus membrane. Inhibits amyloid precursor protein processing, probably by blocking BACE1 activity. The sequence is that of Reticulon-1 (Rtn1) from Rattus norvegicus (Rat).